A 1092-amino-acid chain; its full sequence is Fibrinogen-binding protein (1092 aa).

The N-terminal stretch at 1–51 (MINKKNNLLTKKKPIANKSNKYAIRKFTVGTASIVIGATLLFGLGHNEAKA) is a signal peptide. Positions 50-63 (KAEENSVQDVKDSN) are enriched in basic and acidic residues. Positions 50–236 (KAEENSVQDV…GYTNIDEKIS (187 aa)) are disordered. A ligand binding A region region spans residues 52 to 599 (EENSVQDVKD…GQGQGDLPPE (548 aa)). Acidic residues predominate over residues 64-76 (TDDELSDSNDQSS). Over residues 84-98 (INNNQSINTDDNNQI) the composition is skewed to low complexity. The segment covering 99-119 (IKKEETNNYDGIEKRSEDRTE) has biased composition (basic and acidic residues). Residues 120 to 140 (STTNVDENEATFLQKTPQDNT) show a composition bias toward polar residues. A compositionally biased stretch (basic and acidic residues) spans 141–151 (HLTEEEVKESS). A compositionally biased stretch (polar residues) spans 160–170 (IDTAQQPSHTT). A compositionally biased stretch (basic and acidic residues) spans 195–220 (KIKESNTESGKEENTIEQPNKVKEDS). 4 residues coordinate Ca(2+): glutamate 294, serine 299, valine 302, and glutamate 309. Positions 579 to 590 (YDNTIAFSTSSG) are interaction with human fibrinogen. CNA-B domains are found at residues 600–713 (KTYK…YQTP) and 714–824 (KYSL…YDDE). A disordered region spans residues 780–1068 (KPSGMTQTTT…NEDYGSKGTL (289 aa)). The span at 791–801 (SGDDDEQDADG) shows a compositional bias: acidic residues. The span at 802 to 814 (EEVHVTITDHDDF) shows a compositional bias: basic and acidic residues. Acidic residues predominate over residues 820–1039 (YYDDESDSDS…DSDSDSDNDS (220 aa)). The LPXTG sorting signal signature appears at 1053–1057 (LPDTG). Threonine 1056 carries the pentaglycyl murein peptidoglycan amidated threonine modification. The propeptide at 1057-1092 (GANEDYGSKGTLLGTLFAGLGALLLGKRRKNRKNKN) is removed by sortase.

Belongs to the serine-aspartate repeat-containing protein (SDr) family.

It is found in the secreted. The protein resides in the cell wall. Promotes bacterial attachment to both soluble and immobilized forms of fibrinogen in a dose-dependent manner. This binding occurs through the beta-chain of human fibrinogen. Could contribute to the initiation of foreign-body infection by allowing bacteria to adhere to biomaterial surfaces that have become coated with host proteins after implantation. Is important in the pathogenesis of central venous catheter (CVC)-associated infection model. In Staphylococcus epidermidis, this protein is Fibrinogen-binding protein (fbe).